The sequence spans 156 residues: Small ribosomal subunit protein uS7 (156 aa).

Belongs to the universal ribosomal protein uS7 family. As to quaternary structure, part of the 30S ribosomal subunit. Contacts proteins S9 and S11.

One of the primary rRNA binding proteins, it binds directly to 16S rRNA where it nucleates assembly of the head domain of the 30S subunit. Is located at the subunit interface close to the decoding center, probably blocks exit of the E-site tRNA. This is Small ribosomal subunit protein uS7 from Lactobacillus acidophilus (strain ATCC 700396 / NCK56 / N2 / NCFM).